The primary structure comprises 444 residues: Cobyrinate a,c-diamide synthase (444 aa).

The GATase cobBQ-type domain maps to 250-438 (IIAIAQDRAF…PHIHFFGSYK (189 aa)). Catalysis depends on Cys-332, which acts as the Nucleophile.

It belongs to the CobB/CbiA family. Mg(2+) is required as a cofactor.

The catalysed reaction is cob(II)yrinate + 2 L-glutamine + 2 ATP + 2 H2O = cob(II)yrinate a,c diamide + 2 L-glutamate + 2 ADP + 2 phosphate + 2 H(+). The protein operates within cofactor biosynthesis; adenosylcobalamin biosynthesis; cob(II)yrinate a,c-diamide from sirohydrochlorin (anaerobic route): step 10/10. Catalyzes the ATP-dependent amidation of the two carboxylate groups at positions a and c of cobyrinate, using either L-glutamine or ammonia as the nitrogen source. The protein is Cobyrinate a,c-diamide synthase of Fusobacterium nucleatum subsp. nucleatum (strain ATCC 25586 / DSM 15643 / BCRC 10681 / CIP 101130 / JCM 8532 / KCTC 2640 / LMG 13131 / VPI 4355).